Consider the following 336-residue polypeptide: Tyrosine phosphatase-like protein H1 (336 aa).

Residues 27–295 (IKKEHHKLMK…EICYRVLCEA (269 aa)) form the Tyrosine-protein phosphatase domain.

The protein belongs to the protein-tyrosine phosphatase family.

The polypeptide is Tyrosine phosphatase-like protein H1 (H1) (Microplitis demolitor (Parasitoid wasp)).